The chain runs to 165 residues: ATP synthase subunit b (165 aa).

The helical transmembrane segment at leucine 5 to leucine 25 threads the bilayer.

This sequence belongs to the ATPase B chain family. F-type ATPases have 2 components, F(1) - the catalytic core - and F(0) - the membrane proton channel. F(1) has five subunits: alpha(3), beta(3), gamma(1), delta(1), epsilon(1). F(0) has three main subunits: a(1), b(2) and c(10-14). The alpha and beta chains form an alternating ring which encloses part of the gamma chain. F(1) is attached to F(0) by a central stalk formed by the gamma and epsilon chains, while a peripheral stalk is formed by the delta and b chains.

Its subcellular location is the cell membrane. F(1)F(0) ATP synthase produces ATP from ADP in the presence of a proton or sodium gradient. F-type ATPases consist of two structural domains, F(1) containing the extramembraneous catalytic core and F(0) containing the membrane proton channel, linked together by a central stalk and a peripheral stalk. During catalysis, ATP synthesis in the catalytic domain of F(1) is coupled via a rotary mechanism of the central stalk subunits to proton translocation. Functionally, component of the F(0) channel, it forms part of the peripheral stalk, linking F(1) to F(0). This is ATP synthase subunit b from Clostridioides difficile (strain 630) (Peptoclostridium difficile).